Consider the following 409-residue polypeptide: Protein PHOSPHATE STARVATION RESPONSE 1 (409 aa).

Over residues 1-15 (MEARPVHRSGSRDLT) the composition is skewed to basic and acidic residues. 3 disordered regions span residues 1 to 42 (MEAR…NSQL), 86 to 108 (EKQQHYTGSSSNNAVQTPSNNDS), and 178 to 226 (ETNS…TGKA). 2 stretches are compositionally biased toward polar residues: residues 16-26 (RTSSIPSTQKP) and 90-108 (HYTGSSSNNAVQTPSNNDS). Positions 192–224 (QIPQPQIVQQQPSPSVELRPVSTTSSNSNNGTG) are enriched in low complexity. Residues 222–282 (GTGKARMRWT…HLQKYRTARY (61 aa)) enclose the HTH myb-type domain. A DNA-binding region (H-T-H motif) is located at residues 253–278 (PKGVLKIMKVEGLTIYHVKSHLQKYR). The stretch at 314-334 (TEALRLQMEVQKQLHEQLEIQ) forms a coiled coil. An LHEQLE motif is present at residues 327 to 332 (LHEQLE). Residues 358–370 (GLTKGTASTSDSA) are compositionally biased toward polar residues. Residues 358-409 (GLTKGTASTSDSAAKSEQEDKKTADSKEVPEEETRKCEELESPQPKRPKIDN) form a disordered region. Basic and acidic residues predominate over residues 371–396 (AKSEQEDKKTADSKEVPEEETRKCEE). Ser399 carries the phosphoserine modification.

It belongs to the MYB-CC family. As to quaternary structure, homodimers and heterodimers. Interacts with SPX1 in a Pi-dependent manner. Does not interact with PHL2 or PHL3. In terms of processing, sumoylated by SIZ1. Sumoylation controls phosphate deficiency responses.

The protein localises to the nucleus. Functionally, transcription factor involved in phosphate starvation signaling. Binds as a dimer to P1BS, an imperfect palindromic sequence 5'-GNATATNC-3', to promote the expression of inorganic phosphate (Pi) starvation-responsive genes. SPX1 is a competitive inhibitor of this DNA-binding. PHR1 binding to its targets is low Pi-dependent. Regulates the expression of miR399. Regulates the expression of IPS1 (At3g09922), a non-coding RNA that mimics the target of miR399 to block the cleavage of PHO2 under Pi-deficient conditions. Regulates lipid remodeling and triacylglycerol accumulation during phosphorus starvation. Required for the shoot-specific hypoxic response. Regulates FER1 expression upon phosphate starvation, linking iron and phosphate homeostasis. Contributes to the homeostasis of both sulfate and phosphate in plants under phosphate deficiency. Required for adaptation to high light and retaining functional photosynthesis during phosphate starvation. Involved in the coregulation of Zn and Pi homeostasis. This Arabidopsis thaliana (Mouse-ear cress) protein is Protein PHOSPHATE STARVATION RESPONSE 1.